Consider the following 370-residue polypeptide: Accessory Sec system protein translocase subunit SecY2 (370 aa).

A run of 9 helical transmembrane segments spans residues I17–T37, V65–Y85, I105–H125, W134–N154, M155–M175, L188–I208, I240–V260, F276–I296, and W339–I359.

The protein belongs to the SecY/SEC61-alpha family. SecY2 subfamily. In terms of assembly, component of the accessory SecA2/SecY2 protein translocase complex required to export cell wall proteins. May form heterotrimers with SecE and SecG subunits.

It localises to the cell membrane. Part of the accessory SecA2/SecY2 system specifically required for export of possible cell wall proteins. The central subunit of a protein translocation channel. This is Accessory Sec system protein translocase subunit SecY2 from Staphylococcus carnosus (strain TM300).